The following is a 425-amino-acid chain: 3-phosphoshikimate 1-carboxyvinyltransferase (425 aa).

The 3-phosphoshikimate site is built by lysine 22, serine 23, and arginine 27. Residue lysine 22 participates in phosphoenolpyruvate binding. Glycine 95 and arginine 123 together coordinate phosphoenolpyruvate. Residues serine 169, serine 170, glutamine 171, serine 197, aspartate 313, asparagine 336, and lysine 340 each contribute to the 3-phosphoshikimate site. Glutamine 171 lines the phosphoenolpyruvate pocket. Aspartate 313 acts as the Proton acceptor in catalysis. Phosphoenolpyruvate is bound by residues arginine 344, arginine 386, and lysine 411.

The protein belongs to the EPSP synthase family. As to quaternary structure, monomer.

It is found in the cytoplasm. It catalyses the reaction 3-phosphoshikimate + phosphoenolpyruvate = 5-O-(1-carboxyvinyl)-3-phosphoshikimate + phosphate. It functions in the pathway metabolic intermediate biosynthesis; chorismate biosynthesis; chorismate from D-erythrose 4-phosphate and phosphoenolpyruvate: step 6/7. In terms of biological role, catalyzes the transfer of the enolpyruvyl moiety of phosphoenolpyruvate (PEP) to the 5-hydroxyl of shikimate-3-phosphate (S3P) to produce enolpyruvyl shikimate-3-phosphate and inorganic phosphate. The protein is 3-phosphoshikimate 1-carboxyvinyltransferase of Marinomonas sp. (strain MWYL1).